Here is a 717-residue protein sequence, read N- to C-terminus: F-box only protein 42 (717 aa).

The span at 1-30 (MASSSDSEDDSFMAVDQEETVLEGTMDQDE) shows a compositional bias: acidic residues. The segment at 1 to 34 (MASSSDSEDDSFMAVDQEETVLEGTMDQDEEPHP) is disordered. An F-box domain is found at 44–93 (NRSMSELPEEVLEYILSFLSPYQEHKTAALVCKQWYRLIKGVAHQCYHGF). 4 Kelch repeats span residues 132-184 (SMYV…VYKD), 186-242 (LVLF…VIDD), 244-293 (MIVF…VIDD), and 295-342 (TILI…LWCH). Positions 361 to 474 (RAPLSPSLNS…PSTPSAPEGY (114 aa)) are disordered. Residues 363–376 (PLSPSLNSRPSPIS) are compositionally biased toward low complexity. 2 positions are modified to phosphoserine: Ser-365 and Ser-373. Thr-378 carries the post-translational modification Phosphothreonine. 2 stretches are compositionally biased toward polar residues: residues 416-426 (QRQTPSGSREG) and 455-469 (SLDS…STPS). Phosphoserine is present on Ser-552. Over residues 570-596 (GPSASAALSPPLGSSPGSPGSQSLSSG) the composition is skewed to low complexity. The segment at 570–631 (GPSASAALSP…GHHPPQSLNV (62 aa)) is disordered.

In terms of assembly, component of some SCF complex, composed of CUL1, SKP1, RBX1 and FBXO42. Interacts (via the kelch domain) with p53/TP53; interaction is direct.

Functionally, substrate-recognition component of some SCF (SKP1-CUL1-F-box protein)-type E3 ubiquitin ligase complex. Specifically recognizes p53/TP53, promoting its ubiquitination and degradation. This chain is F-box only protein 42 (FBXO42), found in Homo sapiens (Human).